The following is a 749-amino-acid chain: Protein phosphatase 1E (749 aa).

The segment at 21–128 (EFRGPCGGGE…PPLPPLPRPL (108 aa)) is disordered. 3 repeat units span residues 31–32 (PE), 33–34 (PE), and 35–36 (PE). Residues 31–44 (PEPEPESEPEPEPE) are 7 X 2 AA tandem repeats of P-E. Residues 31–45 (PEPEPESEPEPEPEA) are compositionally biased toward acidic residues. One copy of the 4; approximate repeat lies at 37–38 (SE). Tandem repeats lie at residues 39 to 40 (PE), 41 to 42 (PE), and 43 to 44 (PE). Over residues 46–55 (ELVAAEAAEA) the composition is skewed to low complexity. A compositionally biased stretch (acidic residues) spans 69 to 102 (ATEEGEQDQDPEPEDEAVEEETATEGEEEEEEEA). Positions 110–126 (VPPPPQPQLPPLPPLPR) are enriched in pro residues. Positions 224 to 485 (QIYYETSIHA…DNITVIVVFL (262 aa)) constitute a PPM-type phosphatase domain. Residues D270, G271, D432, and D476 each contribute to the Mn(2+) site. The disordered stretch occupies residues 495 to 537 (SEESEWTENSFQGGQEDGGDDKETHGECKRPWPQHQCSAPADL). Positions 515 to 524 (DKETHGECKR) are enriched in basic and acidic residues. A phosphoserine mark is found at S532 and S545. The interval 608–627 (VKSSLPERSGAGEPRVSFNL) is disordered.

The protein belongs to the PP2C family. Heterotrimer. Interacts with PAX1 and ARHGEF6 (or ARHGEF7). It depends on Mg(2+) as a cofactor. Requires Mn(2+) as cofactor.

It is found in the nucleus. Its subcellular location is the cytoplasm. It catalyses the reaction O-phospho-L-seryl-[protein] + H2O = L-seryl-[protein] + phosphate. It carries out the reaction O-phospho-L-threonyl-[protein] + H2O = L-threonyl-[protein] + phosphate. Protein phosphatase that inactivates multifunctional CaM kinases such as CAMK4 and CAMK2. Dephosphorylates and inactivates PAK. May play a role in the inhibition of actin fiber stress breakdown and in morphological changes driven by TNK2/CDC42. Dephosphorylates PRKAA2. This chain is Protein phosphatase 1E (Ppm1e), found in Mus musculus (Mouse).